Consider the following 490-residue polypeptide: Ketol-acid reductoisomerase (NADP(+)) (490 aa).

The region spanning 15 to 208 (INLQKCKLID…GSHHAGILHS (194 aa)) is the KARI N-terminal Rossmann domain. Residues 45–48 (CGSQ), R68, S78, and 108–110 (DKQ) each bind NADP(+). H132 is a catalytic residue. G158 contributes to the NADP(+) binding site. 2 consecutive KARI C-terminal knotted domains span residues 209-344 (SFIA…KCNI) and 345-484 (YYKQ…MTSM). Mg(2+) contacts are provided by D217, E221, E389, and E393. S414 serves as a coordination point for substrate.

This sequence belongs to the ketol-acid reductoisomerase family. The cofactor is Mg(2+).

The enzyme catalyses (2R)-2,3-dihydroxy-3-methylbutanoate + NADP(+) = (2S)-2-acetolactate + NADPH + H(+). The catalysed reaction is (2R,3R)-2,3-dihydroxy-3-methylpentanoate + NADP(+) = (S)-2-ethyl-2-hydroxy-3-oxobutanoate + NADPH + H(+). It functions in the pathway amino-acid biosynthesis; L-isoleucine biosynthesis; L-isoleucine from 2-oxobutanoate: step 2/4. It participates in amino-acid biosynthesis; L-valine biosynthesis; L-valine from pyruvate: step 2/4. Involved in the biosynthesis of branched-chain amino acids (BCAA). Catalyzes an alkyl-migration followed by a ketol-acid reduction of (S)-2-acetolactate (S2AL) to yield (R)-2,3-dihydroxy-isovalerate. In the isomerase reaction, S2AL is rearranged via a Mg-dependent methyl migration to produce 3-hydroxy-3-methyl-2-ketobutyrate (HMKB). In the reductase reaction, this 2-ketoacid undergoes a metal-dependent reduction by NADPH to yield (R)-2,3-dihydroxy-isovalerate. In Buchnera aphidicola subsp. Melaphis rhois, this protein is Ketol-acid reductoisomerase (NADP(+)).